A 498-amino-acid chain; its full sequence is Phenylalanine--tRNA ligase alpha subunit (498 aa).

Residues Thr-328, 372 to 374 (QVE), and Tyr-412 each bind L-phenylalanine. Position 414 (Glu-414) interacts with Mg(2+). Phe-438 contributes to the L-phenylalanine binding site.

It belongs to the class-II aminoacyl-tRNA synthetase family. Phe-tRNA synthetase alpha subunit type 2 subfamily. As to quaternary structure, tetramer of two alpha and two beta subunits. The cofactor is Mg(2+).

It is found in the cytoplasm. It carries out the reaction tRNA(Phe) + L-phenylalanine + ATP = L-phenylalanyl-tRNA(Phe) + AMP + diphosphate + H(+). In Drosophila melanogaster (Fruit fly), this protein is Phenylalanine--tRNA ligase alpha subunit.